The sequence spans 304 residues: C-type lectin domain-containing protein 141 (304 aa).

The signal sequence occupies residues 1–19 (MRSSSTLLIAFGLFLASMS). Residues 29–100 (GSGGHRPPSS…TTPEPTTTKV (72 aa)) form a disordered region. Over residues 51–99 (TKPPKSTSTPSTSTSTPTTTTTTTTTTTTTPTTTTTTTTTTTPEPTTTK) the composition is skewed to low complexity.

This is C-type lectin domain-containing protein 141 (clec-141) from Caenorhabditis elegans.